The primary structure comprises 360 residues: Peptide chain release factor 1 (360 aa).

Gln235 carries the post-translational modification N5-methylglutamine.

This sequence belongs to the prokaryotic/mitochondrial release factor family. Post-translationally, methylated by PrmC. Methylation increases the termination efficiency of RF1.

It localises to the cytoplasm. Functionally, peptide chain release factor 1 directs the termination of translation in response to the peptide chain termination codons UAG and UAA. In Leptothrix cholodnii (strain ATCC 51168 / LMG 8142 / SP-6) (Leptothrix discophora (strain SP-6)), this protein is Peptide chain release factor 1.